The primary structure comprises 225 residues: LHFPL tetraspan subfamily member 2a protein (225 aa).

Helical transmembrane passes span 11-31 (MLWTLLSIVAAFSELIAFLST), 99-119 (IFLAAGILLLCAVAFISIFTM), 129-149 (IFNVCGLLQAIAGLFLIVGLV), and 178-198 (AGWAFYTALAGTVLCFLCAVF).

This sequence belongs to the LHFP family.

The protein resides in the membrane. Its function is as follows. Plays a role in fertility. Involved in distal reproductive tract development. The polypeptide is LHFPL tetraspan subfamily member 2a protein (Danio rerio (Zebrafish)).